Here is a 561-residue protein sequence, read N- to C-terminus: Laccase-1 (561 aa).

Residues 1–20 form the signal peptide; that stretch reads MKNSFFSSLAKFASLSLAFA. Plastocyanin-like domains lie at 68–185 and 191–337; these read VVQN…GPAT and DLGM…YTGS. Asn71, Asn87, and Asn114 each carry an N-linked (GlcNAc...) asparagine glycan. The Cu cation site is built by His119, His121, His163, and His165. Cysteines 140 and 542 form a disulfide. Asn226, Asn284, Asn327, Asn391, and Asn398 each carry an N-linked (GlcNAc...) asparagine glycan. Residues 396–525 form the Plastocyanin-like 3 domain; the sequence is LLNWTDPTLL…ALQFVESESS (130 aa). Positions 445, 448, 450, 504, 505, 506, and 510 each coordinate Cu cation.

The protein belongs to the multicopper oxidase family. It depends on Cu cation as a cofactor.

The protein localises to the secreted. It carries out the reaction 4 hydroquinone + O2 = 4 benzosemiquinone + 2 H2O. In terms of biological role, lignin degradation and detoxification of lignin-derived products. The protein is Laccase-1 (lcc1) of Botryotinia fuckeliana (Noble rot fungus).